Consider the following 78-residue polypeptide: Probable [Fe-S]-dependent transcriptional repressor (78 aa).

Iron-sulfur cluster is bound by residues cysteine 56, cysteine 61, cysteine 64, and cysteine 70.

It belongs to the FeoC family.

Functionally, may function as a transcriptional regulator that controls feoABC expression. The polypeptide is Probable [Fe-S]-dependent transcriptional repressor (Escherichia coli O7:K1 (strain IAI39 / ExPEC)).